A 1151-amino-acid chain; its full sequence is ATP-dependent RNA helicase ddx46 (1151 aa).

Composition is skewed to basic and acidic residues over residues Met1–Asn26 and Tyr35–His51. Disordered stretches follow at residues Met1–Asp138, Met166–Gln224, Gln287–Asn358, and Thr424–Ile449. Positions Tyr52 to Gly73 are enriched in low complexity. Polar residues predominate over residues Ser81–His90. Composition is skewed to low complexity over residues Gln91–Ile124, Met166–His199, Gln207–Gln224, and Ala291–Pro339. Positions Ile428–Asp443 are enriched in acidic residues. The Q motif motif lies at Gln509 to Ala537. The Helicase ATP-binding domain maps to Ile540–Ile718. Ala553–Thr560 contacts ATP. A DEAD box motif is present at residues Asp666 to Asp669. The Helicase C-terminal domain maps to Asp729 to Asn890. Residues Leu904–Lys972 are disordered. Residues His915 to Lys930 show a composition bias toward basic and acidic residues. The span at Ile938–Asp948 shows a compositional bias: acidic residues. Residues Lys949 to Lys972 are compositionally biased toward basic and acidic residues.

This sequence belongs to the DEAD box helicase family. DDX46/PRP5 subfamily. As to quaternary structure, component of the 17S U2 SnRNP complex, a ribonucleoprotein complex that contains small nuclear RNA (snRNA) U2 and a number of specific proteins.

The protein resides in the nucleus speckle. It carries out the reaction ATP + H2O = ADP + phosphate + H(+). Component of the 17S U2 SnRNP complex of the spliceosome, a large ribonucleoprotein complex that removes introns from transcribed pre-mRNAs. The chain is ATP-dependent RNA helicase ddx46 (helB1) from Dictyostelium discoideum (Social amoeba).